A 566-amino-acid chain; its full sequence is Viral IRF3-like protein (566 aa).

2 disordered regions span residues 151-170 (PRPFVGENSDSSEEDHPAFC) and 176-236 (QTGA…VHTD).

Belongs to the IRF family. In terms of assembly, interacts with host SKP2. Interacts with host USP7.

Functionally, plays a role in the inhibition of host immune response. Interferes with the transactivating potential of cellular IRFs IRF3 and IRF7 that play a critical role in the induction of IFNA and IFNB genes. Additionally, interferes with surface major histocompatibility complex class II (MHC-II) antigen presentation. This is Viral IRF3-like protein (vIRF-3) from Human herpesvirus 8 type P (isolate GK18) (HHV-8).